Here is a 433-residue protein sequence, read N- to C-terminus: Glutamyl-tRNA reductase (433 aa).

Substrate-binding positions include 49–52 (TCNR), Ser109, 114–116 (EGQ), and Gln120. The active-site Nucleophile is Cys50. 189–194 (GAGKMS) lines the NADP(+) pocket.

The protein belongs to the glutamyl-tRNA reductase family. As to quaternary structure, homodimer.

The catalysed reaction is (S)-4-amino-5-oxopentanoate + tRNA(Glu) + NADP(+) = L-glutamyl-tRNA(Glu) + NADPH + H(+). It participates in porphyrin-containing compound metabolism; protoporphyrin-IX biosynthesis; 5-aminolevulinate from L-glutamyl-tRNA(Glu): step 1/2. The protein operates within porphyrin-containing compound metabolism; chlorophyll biosynthesis. Catalyzes the NADPH-dependent reduction of glutamyl-tRNA(Glu) to glutamate 1-semialdehyde (GSA). The protein is Glutamyl-tRNA reductase of Acaryochloris marina (strain MBIC 11017).